The primary structure comprises 238 residues: MATLKASFLIKTLDSDVTGDFLSDLERRGSGAVHVIMGPMFSGKSTSLLRRIKSEISDGRSVAMLKSSKDTRYAKDSVVTHDGIGFPCWALPDLMSFPEKFGLDAYNKLDVIGIDEAQFFGDLYEFCCKVADDDGKIVIVAGLDGDYLRRSFGAVLDIIPIADSVTKLTARCEVCGHKAFFTLRKNCDTRTELIGGADVYMPVCRKHYITNHIVIKASKKVLEDSDKARAESCVAATI.

ATP contacts are provided by residues 38 to 45 (GPMFSGKS), 70 to 72 (DTR), and 115 to 118 (DEAQ). The active-site Proton acceptor is the Glu-116. Residue Tyr-147 participates in substrate binding. Zn(2+)-binding residues include Cys-172 and Cys-175. Residues 191 to 195 (TELIG) and Tyr-200 contribute to the substrate site. Cys-204 contributes to the Zn(2+) binding site.

This sequence belongs to the thymidine kinase family. Monomer and dimer. Dimerization is stimulated by ATP. As to expression, expressed ubiquitously.

It localises to the cytoplasm. It carries out the reaction thymidine + ATP = dTMP + ADP + H(+). It functions in the pathway purine metabolism. It participates in pyrimidine metabolism. Functionally, part of the salvage pathway for purine and pyrimidine deoxyribonucleotide synthesis. Phosphorylates preferentially purines over pyrimidines. Mediates tolerance to genotoxins, such as ultraviolet-C (UV-C) irradiation, MMC, a DNA crosslinker, and ZEO, a DNA intercalator, that induce double-strand breaks and thus contributes to several DNA repair pathways by providing deoxythymidine triphosphate that serve as precursors for DNA repair and to balance deoxyribonucleotides pools. This is Thymidine kinase a from Arabidopsis thaliana (Mouse-ear cress).